Reading from the N-terminus, the 281-residue chain is Elongation factor Ts (281 aa).

Positions 80-83 (TDFV) are involved in Mg(2+) ion dislocation from EF-Tu.

Belongs to the EF-Ts family.

The protein resides in the cytoplasm. In terms of biological role, associates with the EF-Tu.GDP complex and induces the exchange of GDP to GTP. It remains bound to the aminoacyl-tRNA.EF-Tu.GTP complex up to the GTP hydrolysis stage on the ribosome. The chain is Elongation factor Ts from Aliivibrio fischeri (strain MJ11) (Vibrio fischeri).